The primary structure comprises 109 residues: Putative pterin-4-alpha-carbinolamine dehydratase (109 aa).

The protein belongs to the pterin-4-alpha-carbinolamine dehydratase family.

It carries out the reaction (4aS,6R)-4a-hydroxy-L-erythro-5,6,7,8-tetrahydrobiopterin = (6R)-L-erythro-6,7-dihydrobiopterin + H2O. This is Putative pterin-4-alpha-carbinolamine dehydratase from Halorhodospira halophila (strain DSM 244 / SL1) (Ectothiorhodospira halophila (strain DSM 244 / SL1)).